A 100-amino-acid polypeptide reads, in one-letter code: Large ribosomal subunit protein bL27 (100 aa).

A propeptide spanning residues 1-9 is cleaved from the precursor; that stretch reads MIIMNLQIF. The tract at residues 13–32 is disordered; the sequence is KGMGSSKNGRDSESKRLGTK.

It belongs to the bacterial ribosomal protein bL27 family. The N-terminus is cleaved by ribosomal processing cysteine protease Prp.

This Clostridium kluyveri (strain ATCC 8527 / DSM 555 / NBRC 12016 / NCIMB 10680 / K1) protein is Large ribosomal subunit protein bL27.